The chain runs to 84 residues: Gomesin (84 aa).

Residues 1–23 (MNRTRLFACLLLAVLILVHESNA) form the signal peptide. A Pyrrolidone carboxylic acid modification is found at glutamine 24. Intrachain disulfides connect cysteine 25–cysteine 38 and cysteine 29–cysteine 34. An Arginine amide modification is found at arginine 41. Residues 42-84 (GKRSLDETNVGTSDVEKRAFDDSNVPSLVEERELEDEGSFIFD) constitute a propeptide that is removed on maturation.

In terms of tissue distribution, in hemocytes only, but not in all hemocytes observed.

It is found in the secreted. Active against several Gram-positive bacteria such as Bacillus spp, Staphylococcus spp and E.faecalis, several Gram-negative bacteria such as E.coli, K.pneumoniae, P.aeruginosa and Salmonella spp, filamentous fungi such as N.crassa, T.viridae and yeasts such as C.albicans. It is active against the parasite L.amazonensis as well. It shows hemolytic activity. In Acanthoscurria gomesiana (Tarantula spider), this protein is Gomesin.